A 496-amino-acid chain; its full sequence is NAD(P)H-quinone oxidoreductase subunit 2 A, chloroplastic (496 aa).

The next 14 membrane-spanning stretches (helical) occupy residues 13 to 33 (SILP…IDLL), 41 to 61 (TFWS…ILLL), 83 to 103 (IFRF…VDYI), 110 to 130 (VTEF…LCGA), 133 to 153 (LISI…LSGY), 168 to 188 (LLMG…PYGL), 213 to 233 (VSIA…LVPF), 245 to 265 (PTPV…ALAT), 279 to 299 (WHLP…LIAV), 307 to 327 (MLAY…IAGD), 338 to 358 (YMLI…SFGL), 380 to 400 (LSLV…GFFG), 413 to 435 (LYFL…SRII), and 470 to 490 (MILC…IIAI).

The protein belongs to the complex I subunit 2 family. As to quaternary structure, NDH is composed of at least 16 different subunits, 5 of which are encoded in the nucleus.

The protein resides in the plastid. It localises to the chloroplast thylakoid membrane. It carries out the reaction a plastoquinone + NADH + (n+1) H(+)(in) = a plastoquinol + NAD(+) + n H(+)(out). The enzyme catalyses a plastoquinone + NADPH + (n+1) H(+)(in) = a plastoquinol + NADP(+) + n H(+)(out). Its function is as follows. NDH shuttles electrons from NAD(P)H:plastoquinone, via FMN and iron-sulfur (Fe-S) centers, to quinones in the photosynthetic chain and possibly in a chloroplast respiratory chain. The immediate electron acceptor for the enzyme in this species is believed to be plastoquinone. Couples the redox reaction to proton translocation, and thus conserves the redox energy in a proton gradient. This is NAD(P)H-quinone oxidoreductase subunit 2 A, chloroplastic from Psilotum nudum (Whisk fern).